Here is a 618-residue protein sequence, read N- to C-terminus: Protein fem-1 homolog C (618 aa).

ANK repeat units lie at residues 2–31 (DLKTAVFNAARDGKLKLLQKLLENKSDREV), 40–70 (NGATPLLMASRYGHLELVEFLMECCCAPVEL), 82–111 (EGAPPLWAASAAGHLKVVQSLLGHGASVNN), 115–144 (TNSTPLRAACFDGHLDIVRYLVEHQADLEV), 148–177 (HGHTCLMISCYKGHREIAQFLLEKGADVNR), 181–210 (KGNTALHDCAESGSLEIMKMLLKFGASMEK), and 213–243 (YGMTPLLSASVTGHTNIVDFLTAHPQTGLAE). TPR repeat units lie at residues 245-279 (ISALELLGATFVDKKRDLLGALQYWKRAMELRHSE) and 337-370 (SYYIRYRGAVYADSGNFERCIRLWKYALDMQQSN). ANK repeat units lie at residues 482–524 (NGFS…DVNS) and 528–557 (DDNSPLHVAASNNHPDIMKLLISGGTHFDS).

The protein belongs to the fem-1 family. In terms of assembly, component of a CRL2 E3 ubiquitin-protein ligase complex, also named ECS (Elongin BC-CUL2/5-SOCS-box protein) complex.

It participates in protein modification; protein ubiquitination. Functionally, substrate-recognition component of a Cul2-RING (CRL2) E3 ubiquitin-protein ligase complex of the DesCEND (destruction via C-end degrons) pathway, which recognizes a C-degron located at the extreme C terminus of target proteins, leading to their ubiquitination and degradation. The C-degron recognized by the DesCEND pathway is usually a motif of less than ten residues and can be present in full-length proteins, truncated proteins or proteolytically cleaved forms. The CRL2(FEM1C) complex specifically recognizes proteins with an arginine at the C-terminus: recognizes and binds proteins ending with -Lys/Arg-Xaa-Arg and -Lys/Arg-Xaa-Xaa-Arg C-degrons, leading to their ubiquitination and degradation. This chain is Protein fem-1 homolog C, found in Danio rerio (Zebrafish).